A 303-amino-acid polypeptide reads, in one-letter code: Sterol-4-alpha-carboxylate 3-dehydrogenase ERG26, decarboxylating (303 aa).

NADP(+)-binding positions include 8 to 9 (SL) and 30 to 32 (TAS). Residue serine 71 coordinates substrate. A disordered region spans residues 77-96 (PTQEPTSEENAHRYDENNAP). NADP(+) contacts are provided by residues tyrosine 102, lysine 106, and 128–131 (IPGI). Tyrosine 102 is a substrate binding site. Residue lysine 106 is the Proton donor of the active site.

It belongs to the 3-beta-HSD family. In terms of assembly, heterotetramer of ERG25, ERG26, ERG27 and ERG28. ERG28 acts as a scaffold to tether ERG27 and other 4,4-demethylation-related enzymes, forming a demethylation enzyme complex, in the endoplasmic reticulum.

It localises to the endoplasmic reticulum membrane. The protein operates within steroid metabolism; ergosterol biosynthesis. In terms of biological role, sterol-4-alpha-carboxylate 3-dehydrogenase; part of the third module of ergosterol biosynthesis pathway that includes the late steps of the pathway. ERG26 is a catalytic component of the C-4 demethylation complex that catalyzes the conversion of 4,4-dimethylfecosterol into fecosterol via 4-methylfecosterol. The third module or late pathway involves the ergosterol synthesis itself through consecutive reactions that mainly occur in the endoplasmic reticulum (ER) membrane. Firstly, the squalene synthase ERG9 catalyzes the condensation of 2 farnesyl pyrophosphate moieties to form squalene, which is the precursor of all steroids. Squalene synthase is crucial for balancing the incorporation of farnesyl diphosphate (FPP) into sterol and nonsterol isoprene synthesis. Secondly, squalene is converted into lanosterol by the consecutive action of the squalene epoxidase ERG1 and the lanosterol synthase ERG7. Then, the delta(24)-sterol C-methyltransferase ERG6 methylates lanosterol at C-24 to produce eburicol. Eburicol is the substrate of the sterol 14-alpha demethylase encoded by CYP51A, CYP51B and CYP51C, to yield 4,4,24-trimethyl ergosta-8,14,24(28)-trienol. CYP51B encodes the enzyme primarily responsible for sterol 14-alpha-demethylation, and plays an essential role in ascospore formation. CYP51A encodes an additional sterol 14-alpha-demethylase, induced on ergosterol depletion and responsible for the intrinsic variation in azole sensitivity. The third CYP51 isoform, CYP51C, does not encode a sterol 14-alpha-demethylase, but is required for full virulence on host wheat ears. The C-14 reductase ERG24 then reduces the C14=C15 double bond which leads to 4,4-dimethylfecosterol. A sequence of further demethylations at C-4, involving the C-4 demethylation complex containing the C-4 methylsterol oxidases ERG25, the sterol-4-alpha-carboxylate 3-dehydrogenase ERG26 and the 3-keto-steroid reductase ERG27, leads to the production of fecosterol via 4-methylfecosterol. ERG28 has a role as a scaffold to help anchor ERG25, ERG26 and ERG27 to the endoplasmic reticulum. The C-8 sterol isomerase ERG2 then catalyzes the reaction which results in unsaturation at C-7 in the B ring of sterols and thus converts fecosterol to episterol. The sterol-C5-desaturases ERG3A and ERG3BB then catalyze the introduction of a C-5 double bond in the B ring to produce 5-dehydroepisterol. The C-22 sterol desaturases ERG5A and ERG5B further convert 5-dehydroepisterol into ergosta-5,7,22,24(28)-tetraen-3beta-ol by forming the C-22(23) double bond in the sterol side chain. Finally, ergosta-5,7,22,24(28)-tetraen-3beta-ol is substrate of the C-24(28) sterol reductase ERG4 to produce ergosterol. The protein is Sterol-4-alpha-carboxylate 3-dehydrogenase ERG26, decarboxylating of Gibberella zeae (strain ATCC MYA-4620 / CBS 123657 / FGSC 9075 / NRRL 31084 / PH-1) (Wheat head blight fungus).